The chain runs to 269 residues: 3-methyl-2-oxobutanoate hydroxymethyltransferase (269 aa).

Aspartate 50 and aspartate 89 together coordinate Mg(2+). 3-methyl-2-oxobutanoate is bound by residues 50 to 51 (DS), aspartate 89, and lysine 118. Glutamate 120 is a binding site for Mg(2+). Catalysis depends on glutamate 187, which acts as the Proton acceptor.

This sequence belongs to the PanB family. In terms of assembly, homodecamer; pentamer of dimers. It depends on Mg(2+) as a cofactor.

The protein resides in the cytoplasm. It carries out the reaction 3-methyl-2-oxobutanoate + (6R)-5,10-methylene-5,6,7,8-tetrahydrofolate + H2O = 2-dehydropantoate + (6S)-5,6,7,8-tetrahydrofolate. The protein operates within cofactor biosynthesis; (R)-pantothenate biosynthesis; (R)-pantoate from 3-methyl-2-oxobutanoate: step 1/2. Its function is as follows. Catalyzes the reversible reaction in which hydroxymethyl group from 5,10-methylenetetrahydrofolate is transferred onto alpha-ketoisovalerate to form ketopantoate. This is 3-methyl-2-oxobutanoate hydroxymethyltransferase from Nitrosomonas eutropha (strain DSM 101675 / C91 / Nm57).